Reading from the N-terminus, the 200-residue chain is GTP cyclohydrolase-2 (200 aa).

Residue 52-56 coordinates GTP; it reads RIHSE. Zn(2+) is bound by residues cysteine 57, cysteine 68, and cysteine 70. GTP is bound by residues glutamine 73, 94 to 96, and threonine 116; that span reads EGR. The Proton acceptor role is filled by aspartate 128. Arginine 130 serves as the catalytic Nucleophile. The GTP site is built by threonine 151 and lysine 156.

The protein belongs to the GTP cyclohydrolase II family. The cofactor is Zn(2+).

The enzyme catalyses GTP + 4 H2O = 2,5-diamino-6-hydroxy-4-(5-phosphoribosylamino)-pyrimidine + formate + 2 phosphate + 3 H(+). Its pathway is cofactor biosynthesis; riboflavin biosynthesis; 5-amino-6-(D-ribitylamino)uracil from GTP: step 1/4. Its function is as follows. Catalyzes the conversion of GTP to 2,5-diamino-6-ribosylamino-4(3H)-pyrimidinone 5'-phosphate (DARP), formate and pyrophosphate. The sequence is that of GTP cyclohydrolase-2 from Psychromonas ingrahamii (strain DSM 17664 / CCUG 51855 / 37).